The following is a 217-amino-acid chain: Histone H1-gamma, late (217 aa).

Disordered regions lie at residues 1 to 21 (MSAA…HPPS) and 80 to 217 (GKGA…PAKK). In terms of domain architecture, H15 spans 17–91 (AHPPSSQMVV…GASGSFKLGK (75 aa)). A compositionally biased stretch (basic residues) spans 104–113 (IAAKKAKLAA). Basic and acidic residues predominate over residues 114-123 (KKKEQREKKA). Positions 124–217 (LKTKARKEKV…AKKAAKPAKK (94 aa)) are enriched in basic residues.

Belongs to the histone H1/H5 family.

It is found in the nucleus. The protein localises to the chromosome. Its function is as follows. Histones H1 are necessary for the condensation of nucleosome chains into higher-order structures. In Strongylocentrotus purpuratus (Purple sea urchin), this protein is Histone H1-gamma, late.